Consider the following 512-residue polypeptide: Histidine ammonia-lyase (512 aa).

The segment at residues 143–145 (CSG) is a cross-link (5-imidazolinone (Cys-Gly)). Ser144 carries the post-translational modification 2,3-didehydroalanine (Ser).

The protein belongs to the PAL/histidase family. Post-translationally, contains an active site 4-methylidene-imidazol-5-one (MIO), which is formed autocatalytically by cyclization and dehydration of residues Cys-Ser-Gly.

The protein resides in the cytoplasm. The enzyme catalyses L-histidine = trans-urocanate + NH4(+). It functions in the pathway amino-acid degradation; L-histidine degradation into L-glutamate; N-formimidoyl-L-glutamate from L-histidine: step 1/3. The protein is Histidine ammonia-lyase of Streptomyces coelicolor (strain ATCC BAA-471 / A3(2) / M145).